The following is a 498-amino-acid chain: ATP synthase subunit beta, chloroplastic (498 aa).

Residue 172 to 179 (GGAGVGKT) coordinates ATP.

It belongs to the ATPase alpha/beta chains family. In terms of assembly, F-type ATPases have 2 components, CF(1) - the catalytic core - and CF(0) - the membrane proton channel. CF(1) has five subunits: alpha(3), beta(3), gamma(1), delta(1), epsilon(1). CF(0) has four main subunits: a(1), b(1), b'(1) and c(9-12).

The protein localises to the plastid. It is found in the chloroplast thylakoid membrane. It catalyses the reaction ATP + H2O + 4 H(+)(in) = ADP + phosphate + 5 H(+)(out). In terms of biological role, produces ATP from ADP in the presence of a proton gradient across the membrane. The catalytic sites are hosted primarily by the beta subunits. This is ATP synthase subunit beta, chloroplastic from Nicotiana tomentosiformis (Tobacco).